Here is a 411-residue protein sequence, read N- to C-terminus: 2-oxoglutarate-dependent dioxygenase AOP3 (411 aa).

In terms of domain architecture, Fe2OG dioxygenase spans 259-356 (GNASVGAKEA…RYAAALFSNP (98 aa)). Fe cation contacts are provided by His279, Asp281, and His336. 2-oxoglutarate is bound at residue Arg347.

It belongs to the iron/ascorbate-dependent oxidoreductase family. The cofactor is Fe(2+). As to expression, not expressed.

2-oxoglutarate-dependent dioxygenase involved in glucosinolates biosynthesis. Catalyzes the conversion of methylsulfinylalkyl glucosinolates to hydroxyalkyl glucosinolates. The chain is 2-oxoglutarate-dependent dioxygenase AOP3 (AOP3) from Arabidopsis thaliana (Mouse-ear cress).